The primary structure comprises 131 residues: Phosphoribosyl-AMP cyclohydrolase (131 aa).

Asp-89 is a binding site for Mg(2+). Residue Cys-90 coordinates Zn(2+). 2 residues coordinate Mg(2+): Asp-91 and Asp-93. Residues Cys-106 and Cys-113 each coordinate Zn(2+).

The protein belongs to the PRA-CH family. As to quaternary structure, homodimer. Requires Mg(2+) as cofactor. It depends on Zn(2+) as a cofactor.

The protein resides in the cytoplasm. It carries out the reaction 1-(5-phospho-beta-D-ribosyl)-5'-AMP + H2O = 1-(5-phospho-beta-D-ribosyl)-5-[(5-phospho-beta-D-ribosylamino)methylideneamino]imidazole-4-carboxamide. It functions in the pathway amino-acid biosynthesis; L-histidine biosynthesis; L-histidine from 5-phospho-alpha-D-ribose 1-diphosphate: step 3/9. Catalyzes the hydrolysis of the adenine ring of phosphoribosyl-AMP. The protein is Phosphoribosyl-AMP cyclohydrolase of Bifidobacterium longum (strain DJO10A).